The primary structure comprises 461 residues: Histone acetyltransferase KAT5 (461 aa).

One can recognise a Tudor-knot domain in the interval 8–65; the sequence is IEGCRLPVLRRNQDNEDEWPLAEILSVKDISGRKLFYVHYIDFNKRLDEWVTHERLDL. The residue at position 52 (K52) is an N6-acetyllysine. Residues 70 to 168 are disordered; that stretch reads FPKKEAKTPT…RMTGSLVSDR (99 aa). Phosphoserine is present on residues S86 and S90. Residues 90 to 100 are compositionally biased toward basic and acidic residues; the sequence is SPEREVKRKVE. K96, K98, K135, and K137 each carry N6-acetyllysine; by autocatalysis. S147 bears the Phosphoserine mark. In terms of domain architecture, MYST-type HAT spans 175-452; that stretch reads TRMKNIECIE…IDSKCLHFTP (278 aa). The C2HC MYST-type zinc-finger motif lies at 208–233; sequence LYLCEFCLKYGRSLKCLQRHLTKCDL. K275 is modified (N6-acetyllysine; by autocatalysis). Positions 316-461 are interaction with ATF2; that stretch reads ACILTLPPYQ…PKDWSKRGKW (146 aa). Acetyl-CoA-binding positions include 318 to 320 and 325 to 331; these read ILT and QRRGYGK. The active-site Proton donor/acceptor is the E351. Residues S355 and S364 each coordinate acetyl-CoA. K378 is covalently cross-linked (Glycyl lysine isopeptide (Lys-Gly) (interchain with G-Cter in SUMO1); alternate). K378 participates in a covalent cross-link: Glycyl lysine isopeptide (Lys-Gly) (interchain with G-Cter in SUMO2); alternate. K399 participates in a covalent cross-link: Glycyl lysine isopeptide (Lys-Gly) (interchain with G-Cter in SUMO1).

This sequence belongs to the MYST (SAS/MOZ) family. As to quaternary structure, component of the NuA4 histone acetyltransferase complex which contains the catalytic subunit KAT5/TIP60 and the subunits EP400, TRRAP/PAF400, BRD8/SMAP, EPC1, DMAP1/DNMAP1, RUVBL1/TIP49, RUVBL2, ING3, actin, ACTL6A/BAF53A, MORF4L1/MRG15, MORF4L2/MRGX, MRGBP, YEATS4/GAS41, VPS72/YL1 and MEAF6. KAT5/TIP60, EPC1, and ING3 together constitute a minimal HAT complex termed Piccolo NuA4. The NuA4 complex interacts with MYC. Interacts with ATM. Interacts with JADE1. Interacts with PLA2G4A/CPLA2, EDNRA and HDAC7. Interacts with the cytoplasmic tail of APP and APBB1/FE65. Interacts with TRIM24 and TRIM68. Forms a complex with SENP6 and UBE2I in response to UV irradiation. Identified in a complex with HINT1. Interacts with ATF2 and CUL3. Interacts with NR1D2 (via N-terminus). Component of a SWR1-like complex. Interacts with FOXP3. Interacts with ZBTB49. Interacts with SRF. Interacts with ATF3; promoting autoacetylation and deubiquitination by USP7. Interacts with EP300/p300; interaction promotes KAT5 autoacetylation. Interacts with PRKDC; interaction is impaired following KAT5 sumoylation. Interacts with GPR50. Post-translationally, phosphorylated on Ser-86 and Ser-90; enhanced during G2/M phase. The phosphorylated form has a higher activity. Phosphorylation at Ser-90 by CDK1 or CDK9 is a prerequisite for phosphorylation at Ser-86 by GSK3. Phosphorylation at Ser-86 by GSK3 (GSK3A or GSK3B) activates acetyltransferase and acyltransferase activities. Phosphorylation at Ser-90 by CDK9 promotes KAT5 recruitment to chromatin. Phosphorylation by VRK1 following DNA damage promotes KAT5 association with chromatin and histone acetyltransferase activity. In terms of processing, autoacetylated. Autoacetylation is required for histone acetyltransferase activity. Autoacetylation at Lys-275 is facilitated by interaction with EP300/p300: it prevents ubiquitination and subsequent degradation by the proteasome and promotes acetylation of target proteins. Deacetylated by HDAC3 and SIRT1. Deacetylation by HDAC3 promotes its ubiquitination and cytoplasmic localization. Sumoylated by UBE2I at Lys-378 and Lys-399, leading to increase of its histone acetyltransferase activity in UV-induced DNA damage response, as well as its translocation to nuclear bodies. Sumoylation with SUMO2 by PIAS4 at Lys-378 promotes repair of DNA double-strand breaks (DSBs) via homologous recombination (HR). Sumoylation by PIAS4 impairs interaction with PRKDC, inhibiting non-homologous end joining (NHEJ)-mediated repair of DSBs, thereby facilitating HR. Desumoylated by SENP3. Post-translationally, ubiquitinated by MDM2, leading to its proteasome-dependent degradation. Ubiquitination is prevented by autoacetylation at Lys-275. Ubiquitinated following deacetylation by HDAC3, leading to cytoplasmic localization. Deubiquitinated by USP7 following interaction with ATF3, promoting its stabilization.

Its subcellular location is the nucleus. It localises to the chromosome. The protein localises to the cytoplasm. It is found in the centromere. The protein resides in the kinetochore. Its subcellular location is the cytoskeleton. It localises to the spindle pole. The protein localises to the nucleolus. It is found in the perinuclear region. It catalyses the reaction L-lysyl-[histone] + acetyl-CoA = N(6)-acetyl-L-lysyl-[histone] + CoA + H(+). The catalysed reaction is L-lysyl-[protein] + acetyl-CoA = N(6)-acetyl-L-lysyl-[protein] + CoA + H(+). The enzyme catalyses (2E)-butenoyl-CoA + L-lysyl-[protein] = N(6)-(2E)-butenoyl-L-lysyl-[protein] + CoA + H(+). It carries out the reaction 2-hydroxyisobutanoyl-CoA + L-lysyl-[protein] = N(6)-(2-hydroxyisobutanoyl)-L-lysyl-[protein] + CoA + H(+). It catalyses the reaction (S)-lactoyl-CoA + L-lysyl-[protein] = N(6)-[(S)-lactoyl]-L-lysyl-[protein] + CoA + H(+). With respect to regulation, acyltransferase and acetyltransferase activities are activated by phosphorylation and autoacetylation. Autoacetylation activates the histone acetyltransferase activity. Its function is as follows. Catalytic subunit of the NuA4 histone acetyltransferase complex, a multiprotein complex involved in transcriptional activation of select genes principally by acetylation of nucleosomal histones H2A and H4. Histone acetylation alters nucleosome-DNA interactions and promotes interaction of the modified histones with other proteins which positively regulate transcription. The NuA4 histone acetyltransferase complex is required for the activation of transcriptional programs associated with proto-oncogene mediated growth induction, tumor suppressor mediated growth arrest and replicative senescence, apoptosis, and DNA repair. The NuA4 complex plays a direct role in repair of DNA double-strand breaks (DSBs) by promoting homologous recombination (HR): the complex inhibits TP53BP1 binding to chromatin via MBTD1, which recognizes and binds histone H4 trimethylated at 'Lys-20' (H4K20me), and KAT5 that catalyzes acetylation of 'Lys-15' of histone H2A (H2AK15ac), thereby blocking the ubiquitination mark required for TP53BP1 localization at DNA breaks. Also involved in DSB repair by mediating acetylation of 'Lys-5' of histone H2AX (H2AXK5ac), promoting NBN/NBS1 assembly at the sites of DNA damage. The NuA4 complex plays a key role in hematopoietic stem cell maintenance and is required to maintain acetylated H2A.Z/H2AZ1 at MYC target genes. The NuA4 complex is also required for spermatid development by promoting acetylation of histones: histone hyperacetylation is required for histone replacement during the transition from round to elongating spermatids. Component of a SWR1-like complex that specifically mediates the removal of histone H2A.Z/H2AZ1 from the nucleosome. Also acetylates non-histone proteins, such as BMAL1, ATM, AURKB, CHKA, CGAS, ERCC4/XPF, LPIN1, TP53/p53, NDC80/HEC1, NR1D2, RAN, SOX4, FOXP3, SQSTM1, ULK1 and RUBCNL/Pacer. Directly acetylates and activates ATM. Promotes nucleotide excision repair (NER) by mediating acetylation of ERCC4/XPF, thereby promoting formation of the ERCC4-ERCC1 complex. Relieves NR1D2-mediated inhibition of APOC3 expression by acetylating NR1D2. Acts as a regulator of regulatory T-cells (Treg) by catalyzing FOXP3 acetylation, thereby promoting FOXP3 transcriptional repressor activity. Involved in skeletal myoblast differentiation by mediating acetylation of SOX4. Catalyzes acetylation of APBB1/FE65, increasing its transcription activator activity. Promotes transcription elongation during the activation phase of the circadian cycle by catalyzing acetylation of BMAL1, promoting elongation of circadian transcripts. Together with GSK3 (GSK3A or GSK3B), acts as a regulator of autophagy: phosphorylated at Ser-86 by GSK3 under starvation conditions, leading to activate acetyltransferase activity and promote acetylation of key autophagy regulators, such as ULK1 and RUBCNL/Pacer. Acts as a regulator of the cGAS-STING innate antiviral response by catalyzing acetylation the N-terminus of CGAS, thereby promoting CGAS DNA-binding and activation. Also regulates lipid metabolism by mediating acetylation of CHKA or LPIN1. Promotes lipolysis of lipid droplets following glucose deprivation by mediating acetylation of isoform 1 of CHKA, thereby promoting monomerization of CHKA and its conversion into a tyrosine-protein kinase. Acts as a regulator of fatty-acid-induced triacylglycerol synthesis by catalyzing acetylation of LPIN1, thereby promoting the synthesis of diacylglycerol. In addition to protein acetyltransferase, can use different acyl-CoA substrates, such as (2E)-butenoyl-CoA (crotonyl-CoA), S-lactoyl-CoA (lactyl-CoA) and 2-hydroxyisobutanoyl-CoA (2-hydroxyisobutyryl-CoA), and is able to mediate protein crotonylation, lactylation and 2-hydroxyisobutyrylation, respectively. Acts as a key regulator of chromosome segregation and kinetochore-microtubule attachment during mitosis by mediating acetylation or crotonylation of target proteins. Catalyzes acetylation of AURKB at kinetochores, increasing AURKB activity and promoting accurate chromosome segregation in mitosis. Acetylates RAN during mitosis, promoting microtubule assembly at mitotic chromosomes. Acetylates NDC80/HEC1 during mitosis, promoting robust kinetochore-microtubule attachment. Catalyzes crotonylation of MAPRE1/EB1, thereby ensuring accurate spindle positioning in mitosis. Catalyzes lactylation of NBN/NBS1 in response to DNA damage, thereby promoting DNA double-strand breaks (DSBs) via homologous recombination (HR). This is Histone acetyltransferase KAT5 from Pongo abelii (Sumatran orangutan).